The sequence spans 527 residues: Tubulin-specific chaperone E (527 aa).

An N-acetylserine modification is found at Ser-2. In terms of domain architecture, CAP-Gly spans 27 to 71; it reads GVVPPVAGPWLGVEWDNPERGKHDGSHEGTVYFKCRHPTGGSFIR. 7 LRR repeats span residues 154-175, 180-200, 205-226, 230-252, 253-274, 278-299, and 308-329; these read NIRK…IHIA, HLEV…SVLT, VLKV…RCVA, GLEE…DVLQ, TVKL…YLIA, RLEQ…DAGI, and SLKY…NELE. Residues 342–384 enclose the LRRCT domain; sequence NPLTKEDKEAETARLLIIASIGQLKTLNKCEILPEERRRAELD. Lys-463 carries the N6-acetyllysine modification. Ser-495 carries the post-translational modification Phosphoserine.

It belongs to the TBCE family. As to quaternary structure, supercomplex made of cofactors A to E. Cofactors A and D function by capturing and stabilizing tubulin in a quasi-native conformation. Cofactor E binds to the cofactor D-tubulin complex; interaction with cofactor C then causes the release of tubulin polypeptides that are committed to the native state. Cofactors B and E can form a heterodimer which binds to alpha-tubulin and enhances their ability to dissociate tubulin heterodimers. Interacts with TBCD.

It localises to the cytoplasm. The protein resides in the cytoskeleton. Functionally, tubulin-folding protein; involved in the second step of the tubulin folding pathway and in the regulation of tubulin heterodimer dissociation. Required for correct organization of microtubule cytoskeleton and mitotic splindle, and maintenance of the neuronal microtubule network. The sequence is that of Tubulin-specific chaperone E (TBCE) from Homo sapiens (Human).